The primary structure comprises 364 residues: Peptidyl-prolyl cis-trans isomerase D (364 aa).

Residues 7–170 form the PPIase cyclophilin-type domain; the sequence is YFDITIGNKP…EDAVIAKCGE (164 aa). TPR repeat units follow at residues 208–241, 261–294, and 301–334; these read ATHL…LNEK, IPCY…DSKY, and TKAY…DPED.

It belongs to the cyclophilin-type PPIase family. PPIase D subfamily.

The protein resides in the cytoplasm. It carries out the reaction [protein]-peptidylproline (omega=180) = [protein]-peptidylproline (omega=0). Functionally, PPIases accelerate the folding of proteins. It catalyzes the cis-trans isomerization of proline imidic peptide bonds in oligopeptides. The sequence is that of Peptidyl-prolyl cis-trans isomerase D (cyp12) from Rhizopus delemar (strain RA 99-880 / ATCC MYA-4621 / FGSC 9543 / NRRL 43880) (Mucormycosis agent).